A 428-amino-acid chain; its full sequence is 3-phosphoshikimate 1-carboxyvinyltransferase (428 aa).

3-phosphoshikimate contacts are provided by Lys-22, Ser-23, and Arg-27. Lys-22 provides a ligand contact to phosphoenolpyruvate. Phosphoenolpyruvate contacts are provided by Gly-96 and Arg-124. 3-phosphoshikimate contacts are provided by Ser-170, Ser-171, Gln-172, Ser-198, Asp-314, Asn-337, and Lys-341. Gln-172 contributes to the phosphoenolpyruvate binding site. The active-site Proton acceptor is the Asp-314. Residues Arg-345, Arg-387, and Lys-412 each coordinate phosphoenolpyruvate.

Belongs to the EPSP synthase family. Monomer.

Its subcellular location is the cytoplasm. It carries out the reaction 3-phosphoshikimate + phosphoenolpyruvate = 5-O-(1-carboxyvinyl)-3-phosphoshikimate + phosphate. It participates in metabolic intermediate biosynthesis; chorismate biosynthesis; chorismate from D-erythrose 4-phosphate and phosphoenolpyruvate: step 6/7. Functionally, catalyzes the transfer of the enolpyruvyl moiety of phosphoenolpyruvate (PEP) to the 5-hydroxyl of shikimate-3-phosphate (S3P) to produce enolpyruvyl shikimate-3-phosphate and inorganic phosphate. This is 3-phosphoshikimate 1-carboxyvinyltransferase from Shewanella denitrificans (strain OS217 / ATCC BAA-1090 / DSM 15013).